The primary structure comprises 458 residues: Chromosomal replication initiator protein DnaA (458 aa).

A domain I, interacts with DnaA modulators region spans residues 1 to 93 (MKTELSEVWQ…NVIEDPAAEP (93 aa)). The segment at 94-119 (VDAPNVADLPAGTSAPAAEQNARLLG) is domain II. A domain III, AAA+ region region spans residues 120–336 (YINPKYTFET…GALTRVVAYA (217 aa)). ATP is bound by residues Gly-164, Gly-166, Lys-167, and Thr-168. The segment at 337-458 (NMLKCPLTYD…EQLIARIRAE (122 aa)) is domain IV, binds dsDNA.

The protein belongs to the DnaA family. As to quaternary structure, oligomerizes as a right-handed, spiral filament on DNA at oriC.

The protein localises to the cytoplasm. Plays an essential role in the initiation and regulation of chromosomal replication. ATP-DnaA binds to the origin of replication (oriC) to initiate formation of the DNA replication initiation complex once per cell cycle. Binds the DnaA box (a 9 base pair repeat at the origin) and separates the double-stranded (ds)DNA. Forms a right-handed helical filament on oriC DNA; dsDNA binds to the exterior of the filament while single-stranded (ss)DNA is stabiized in the filament's interior. The ATP-DnaA-oriC complex binds and stabilizes one strand of the AT-rich DNA unwinding element (DUE), permitting loading of DNA polymerase. After initiation quickly degrades to an ADP-DnaA complex that is not apt for DNA replication. Binds acidic phospholipids. The chain is Chromosomal replication initiator protein DnaA from Symbiobacterium thermophilum (strain DSM 24528 / JCM 14929 / IAM 14863 / T).